The sequence spans 293 residues: Indole-3-glycerol phosphate synthase (293 aa).

Belongs to the TrpC family.

It catalyses the reaction 1-(2-carboxyphenylamino)-1-deoxy-D-ribulose 5-phosphate + H(+) = (1S,2R)-1-C-(indol-3-yl)glycerol 3-phosphate + CO2 + H2O. It participates in amino-acid biosynthesis; L-tryptophan biosynthesis; L-tryptophan from chorismate: step 4/5. The sequence is that of Indole-3-glycerol phosphate synthase from Prochlorococcus marinus (strain SARG / CCMP1375 / SS120).